The following is a 240-amino-acid chain: Fatty acid metabolism regulator protein (240 aa).

One can recognise an HTH gntR-type domain in the interval 6–74 (KGPASFAEKY…HGKPTRVNNF (69 aa)). Residues 34 to 53 (ERELSELIGVTRTTLREVLQ) constitute a DNA-binding region (H-T-H motif).

In terms of assembly, homodimer.

The protein resides in the cytoplasm. In terms of biological role, multifunctional regulator of fatty acid metabolism. The sequence is that of Fatty acid metabolism regulator protein from Shewanella amazonensis (strain ATCC BAA-1098 / SB2B).